We begin with the raw amino-acid sequence, 209 residues long: Octanoyltransferase (209 aa).

The BPL/LPL catalytic domain maps to 30–209; the sequence is DHEPEIIYLV…IQTEFNKIFK (180 aa). Residues 69–76, 143–145, and 156–158 contribute to the substrate site; these read RGGKFTFH, AIG, and GVA. Residue Cys174 is the Acyl-thioester intermediate of the active site.

This sequence belongs to the LipB family.

Its subcellular location is the cytoplasm. It catalyses the reaction octanoyl-[ACP] + L-lysyl-[protein] = N(6)-octanoyl-L-lysyl-[protein] + holo-[ACP] + H(+). The protein operates within protein modification; protein lipoylation via endogenous pathway; protein N(6)-(lipoyl)lysine from octanoyl-[acyl-carrier-protein]: step 1/2. Its function is as follows. Catalyzes the transfer of endogenously produced octanoic acid from octanoyl-acyl-carrier-protein onto the lipoyl domains of lipoate-dependent enzymes. Lipoyl-ACP can also act as a substrate although octanoyl-ACP is likely to be the physiological substrate. The sequence is that of Octanoyltransferase from Rickettsia rickettsii (strain Iowa).